A 121-amino-acid polypeptide reads, in one-letter code: Large ribosomal subunit protein uL18 (121 aa).

It belongs to the universal ribosomal protein uL18 family. As to quaternary structure, part of the 50S ribosomal subunit; part of the 5S rRNA/L5/L18/L25 subcomplex. Contacts the 5S and 23S rRNAs.

Functionally, this is one of the proteins that bind and probably mediate the attachment of the 5S RNA into the large ribosomal subunit, where it forms part of the central protuberance. The protein is Large ribosomal subunit protein uL18 of Ureaplasma parvum serovar 3 (strain ATCC 27815 / 27 / NCTC 11736).